A 426-amino-acid chain; its full sequence is D-tagatose-1,6-bisphosphate aldolase subunit KbaZ (426 aa).

This sequence belongs to the GatZ/KbaZ family. KbaZ subfamily. In terms of assembly, forms a complex with KbaY.

It participates in carbohydrate metabolism; D-tagatose 6-phosphate degradation; D-glyceraldehyde 3-phosphate and glycerone phosphate from D-tagatose 6-phosphate: step 2/2. Component of the tagatose-1,6-bisphosphate aldolase KbaYZ that is required for full activity and stability of the Y subunit. Could have a chaperone-like function for the proper and stable folding of KbaY. When expressed alone, KbaZ does not show any aldolase activity. The polypeptide is D-tagatose-1,6-bisphosphate aldolase subunit KbaZ (Escherichia coli (strain SMS-3-5 / SECEC)).